Consider the following 138-residue polypeptide: Large ribosomal subunit protein uL16 (138 aa).

It belongs to the universal ribosomal protein uL16 family. As to quaternary structure, part of the 50S ribosomal subunit.

Its function is as follows. Binds 23S rRNA and is also seen to make contacts with the A and possibly P site tRNAs. This chain is Large ribosomal subunit protein uL16, found in Mycoplasma genitalium (strain ATCC 33530 / DSM 19775 / NCTC 10195 / G37) (Mycoplasmoides genitalium).